Reading from the N-terminus, the 66-residue chain is uncharacterized protein (66 aa).

The hydrophobic stretch occupies residues methionine 1 to alanine 20.

This is an uncharacterized protein from Streptomyces lividans.